The following is a 2363-amino-acid chain: Spectrin beta chain, non-erythrocytic 1 (2363 aa).

T2 carries the N-acetylthreonine modification. The interval 2–275 (TTTVATDYDN…IITYVVTYYH (274 aa)) is actin-binding. Phosphoserine is present on residues I14 and S36. Calponin-homology (CH) domains are found at residues 54–158 (AVQK…LRFQ) and 173–278 (KSAK…HYFS). K90 carries the N6-acetyllysine modification. S228 bears the Phosphoserine mark. 15 Spectrin repeats span residues 303 to 411 (MIEK…LALR), 423 to 525 (LARR…QRLE), 530 to 636 (LQKI…RLEE), 639 to 742 (RLWK…RLEE), 745 to 847 (LLHQ…ALQD), 850 to 952 (ALYK…DALL), 957 to 1060 (IQNY…SLGE), 1063 to 1166 (KLQQ…NLLS), 1170 to 1259 (AYQQ…RHRK), 1276 to 1376 (DLQK…AQRL), 1381 to 1482 (KAEL…HNLL), 1486 to 1590 (EIHQ…RLEE), 1592 to 1696 (HKAQ…KLDE), 1698 to 1801 (HRLF…TQIL), and 1805 to 1907 (YELH…RVRL). Residues S817, S903, S1057, S1076, S1079, and S1237 each carry the phosphoserine modification. A phosphoserine mark is found at S1388, S1447, and S1557. Residues 1563 to 2093 (IRQRLADLKQ…LLEVRRQQEE (531 aa)) form an interaction with ANK2 region. Y1805 is subject to Phosphotyrosine. 3 positions are modified to N6-acetyllysine: K1815, K1913, and K1989. Spectrin repeat units lie at residues 1914–2014 (FRFF…EWLR) and 2018–2097 (EVHQ…EERK). The interval 2089 to 2193 (RQQEEEERKR…AATLPARTLE (105 aa)) is disordered. S2102, S2127, and S2137 each carry phosphoserine. A compositionally biased stretch (polar residues) spans 2115–2130 (SQQWDTSKGDQVSQNG). The residue at position 2146 (T2146) is a Phosphothreonine. S2147 is subject to Phosphoserine. The interval 2148–2176 (EMVNGAAEQRTSSKESSPVPSPTLDRKAK) is mediates interaction with CAMSAP1. T2158 is modified (phosphothreonine). Phosphoserine occurs at positions 2159, 2160, 2163, 2164, and 2168. Phosphothreonine is present on T2170. S2183 carries the phosphoserine modification. A phosphothreonine mark is found at T2186 and T2194. One can recognise a PH domain in the interval 2196–2306 (AAQMEGFLNR…WIQAISSAIS (111 aa)). Residues 2308-2363 (DKHDTSASTQSTPASSRAQTLPTSVVTITSESSPGKREKDKEKDKEKRFSLFGKKK) are disordered. Residues S2313 and S2318 each carry the phosphoserine modification. Over residues 2313-2327 (SASTQSTPASSRAQT) the composition is skewed to low complexity. T2319 is subject to Phosphothreonine. O-linked (GlcNAc) serine glycosylation is present at S2323. T2327 is modified (phosphothreonine). The segment covering 2328–2340 (LPTSVVTITSESS) has biased composition (polar residues). A phosphoserine mark is found at S2339 and S2340. Positions 2341–2356 (PGKREKDKEKDKEKRF) are enriched in basic and acidic residues.

This sequence belongs to the spectrin family. As to quaternary structure, interacts with ANK2. Interacts with CPNE4 (via VWFA domain). Like erythrocyte spectrin, the spectrin-like proteins are capable to form dimers which can further associate to tetramers. Interacts with CAMSAP1. Can form heterodimers with SPTAN1. In terms of tissue distribution, isoform 2 is present in brain, heart, kidney and liver (at protein level).

It localises to the cytoplasm. The protein resides in the cytoskeleton. It is found in the endomembrane system. Its subcellular location is the myofibril. The protein localises to the sarcomere. It localises to the m line. The protein resides in the cytosol. It is found in the cell membrane. Fodrin, which seems to be involved in secretion, interacts with calmodulin in a calcium-dependent manner and is thus candidate for the calcium-dependent movement of the cytoskeleton at the membrane. Plays a critical role in central nervous system development and function. This chain is Spectrin beta chain, non-erythrocytic 1 (Sptbn1), found in Mus musculus (Mouse).